Reading from the N-terminus, the 306-residue chain is Curved DNA-binding protein (306 aa).

The J domain maps to 5–69 (DYYAIMGVKP…QRRAEYDQMW (65 aa)).

It localises to the cytoplasm. The protein resides in the nucleoid. Functionally, DNA-binding protein that preferentially recognizes a curved DNA sequence. It is probably a functional analog of DnaJ; displays overlapping activities with DnaJ, but functions under different conditions, probably acting as a molecular chaperone in an adaptive response to environmental stresses other than heat shock. Lacks autonomous chaperone activity; binds native substrates and targets them for recognition by DnaK. Its activity is inhibited by the binding of CbpM. The sequence is that of Curved DNA-binding protein from Escherichia coli O157:H7.